The primary structure comprises 197 residues: Probable thymidylate kinase (197 aa).

Residue 7-14 coordinates ATP; it reads GLDGSGKT.

Belongs to the thymidylate kinase family.

It carries out the reaction dTMP + ATP = dTDP + ADP. The sequence is that of Probable thymidylate kinase from Halorubrum lacusprofundi (strain ATCC 49239 / DSM 5036 / JCM 8891 / ACAM 34).